Reading from the N-terminus, the 178-residue chain is Caveolin-1 (178 aa).

Ser-2 is modified (N-acetylserine). Ser-2 carries the phosphoserine modification. The segment at 2 to 94 (SGGKYVDSEG…WKASFTTFTV (93 aa)) is required for homooligomerization. At 2–104 (SGGKYVDSEG…TKYWFYRLLS (103 aa)) the chain is on the cytoplasmic side. The residue at position 5 (Lys-5) is an N6-acetyllysine; alternate. Lys-5 is covalently cross-linked (Glycyl lysine isopeptide (Lys-Gly) (interchain with G-Cter in ubiquitin); alternate). Tyr-6 is subject to Phosphotyrosine. Residue Ser-9 is modified to Phosphoserine. Residue Tyr-14 is modified to Phosphotyrosine; by ABL1. Tyr-25 is subject to Phosphotyrosine. Residues Lys-26 and Lys-30 each participate in a glycyl lysine isopeptide (Lys-Gly) (interchain with G-Cter in ubiquitin) cross-link. A Phosphoserine modification is found at Ser-37. Glycyl lysine isopeptide (Lys-Gly) (interchain with G-Cter in ubiquitin) cross-links involve residues Lys-39, Lys-47, and Lys-57. Positions 82–94 (DGIWKASFTTFTV) are interaction with CAVIN3. The helical intramembrane region spans 105–125 (ALFGIPMALIWGIYFAILSFL). The Cytoplasmic segment spans residues 126-178 (HIWAVVPCIKSFLIEIQCISRVYSIYVHTVCDPLFEAVGKIFSNVRINLQKEI). The interacts with SPRY1, SPRY2, SPRY3 and SPRY4 stretch occupies residues 131-142 (VPCIKSFLIEIQ). S-palmitoyl cysteine attachment occurs at residues Cys-133, Cys-143, and Cys-156. Residues 149–160 (SIYVHTVCDPLF) are interacts with SPRY1, SPRY2, and SPRY4. Positions 167-178 (FSNVRINLQKEI) are interacts with SPRY1, SPRY2, SPRY3 and SPRY4.

Belongs to the caveolin family. As to quaternary structure, homooligomer. Interacts (via the N-terminus) with DPP4; the interaction is direct. Forms a stable heterooligomeric complex with CAV2 that targets to lipid rafts and drives caveolae formation. Interacts with PACSIN2; this interaction induces membrane tubulation. Interacts with BMX, BTK, CTNNB1, CDH1, GLIPR2, JUP, NOSTRIN, SNAP25 and STX1A. Interacts with SLC7A9. Interacts with TGFBR1. Interacts with CAVIN3 (via leucine-zipper domain) in a cholesterol-sensitive manner. Interacts with CAVIN1. Interacts with EHD2 in a cholesterol-dependent manner. Forms a ternary complex with UBXN6 and VCP; mediates CAV1 targeting to lysosomes for degradation. Interacts with ABCG1; this interaction regulates ABCG1-mediated cholesterol efflux. Interacts with NEU3; this interaction enhances NEU3 sialidase activity within caveola. Interacts (via C-terminus) with SPRY1, SPRY2 (via C-terminus), SPRY3, and SPRY4. Interacts with IGFBP5; this interaction allows trafficking of IGFBP5 from the plasma membrane to the nucleus. Post-translationally, phosphorylated at Tyr-14 by ABL1 in response to oxidative stress. Ubiquitinated. Undergo monoubiquitination and multi- and/or polyubiquitination. Monoubiquitination of N-terminal lysines promotes integration in a ternary complex with UBXN6 and VCP which promotes oligomeric CAV1 targeting to lysosomes for degradation. Ubiquitinated by ZNRF1; leading to degradation and modulation of the TLR4-mediated immune response.

The protein localises to the golgi apparatus membrane. It is found in the cell membrane. Its subcellular location is the membrane. The protein resides in the caveola. It localises to the membrane raft. Functionally, may act as a scaffolding protein within caveolar membranes. Forms a stable heterooligomeric complex with CAV2 that targets to lipid rafts and drives caveolae formation. Mediates the recruitment of CAVIN proteins (CAVIN1/2/3/4) to the caveolae. Interacts directly with G-protein alpha subunits and can functionally regulate their activity. Involved in the costimulatory signal essential for T-cell receptor (TCR)-mediated T-cell activation. Its binding to DPP4 induces T-cell proliferation and NF-kappa-B activation in a T-cell receptor/CD3-dependent manner. Recruits CTNNB1 to caveolar membranes and may regulate CTNNB1-mediated signaling through the Wnt pathway. Negatively regulates TGFB1-mediated activation of SMAD2/3 by mediating the internalization of TGFBR1 from membrane rafts leading to its subsequent degradation. Binds 20(S)-hydroxycholesterol (20(S)-OHC). This is Caveolin-1 (CAV1) from Chlorocebus aethiops (Green monkey).